Consider the following 303-residue polypeptide: Sulfotransferase 6B1 (303 aa).

Position 65-70 (K65–W70) interacts with 3'-phosphoadenylyl sulfate. The active-site Proton acceptor is H118. 3'-phosphoadenylyl sulfate is bound by residues R140, S148, Y203, S237–M242, and R259–G261.

It belongs to the sulfotransferase 1 family.

The protein resides in the cytoplasm. Its subcellular location is the cytosol. The enzyme catalyses thyroxine + 3'-phosphoadenylyl sulfate = thyroxine sulfate + adenosine 3',5'-bisphosphate + H(+). Functionally, sulfotransferase that utilizes 3'-phospho-5'-adenylyl sulfate (PAPS) as sulfonate donor to catalyze the sulfate conjugation of thyroxine. Involved in the metabolism of thyroxine. The protein is Sulfotransferase 6B1 (SULT6B1) of Gorilla gorilla gorilla (Western lowland gorilla).